The chain runs to 165 residues: Type 3 secretion system regulator YopR (165 aa).

This sequence belongs to the YopR family.

It is found in the secreted. In terms of biological role, may be involved in the regulation of the assembly of the type III secretion system (T3SS), also called injectisome, which is used to inject bacterial effector proteins into eukaryotic host cells. May control the secretion and/or polymerization of YscF/SctF, the principal component of the needle filament, thereby impacting the assembly of the T3SS. Involved in pathogenesis. The polypeptide is Type 3 secretion system regulator YopR (Yersinia pestis).